The chain runs to 174 residues: tRNA (cytidine(56)-2'-O)-methyltransferase (174 aa).

Residues leucine 83, 108–112, and 126–133 each bind S-adenosyl-L-methionine; these read GAEKV and VGNQPHSE.

This sequence belongs to the aTrm56 family. In terms of assembly, homodimer.

Its subcellular location is the cytoplasm. The enzyme catalyses cytidine(56) in tRNA + S-adenosyl-L-methionine = 2'-O-methylcytidine(56) in tRNA + S-adenosyl-L-homocysteine + H(+). Specifically catalyzes the AdoMet-dependent 2'-O-ribose methylation of cytidine at position 56 in tRNAs. This Methanothrix thermoacetophila (strain DSM 6194 / JCM 14653 / NBRC 101360 / PT) (Methanosaeta thermophila) protein is tRNA (cytidine(56)-2'-O)-methyltransferase.